The sequence spans 722 residues: Disintegrin and metalloproteinase domain-containing protein 21 (722 aa).

Residues methionine 1 to alanine 31 form the signal peptide. Residues glycine 32 to glutamate 196 constitute a propeptide that is removed on maturation. N-linked (GlcNAc...) asparagine glycosylation is present at asparagine 164. The short motif at methionine 171 to lysine 178 is the Cysteine switch element. Cysteine 173 is a binding site for Zn(2+). Topologically, residues proline 197–glycine 681 are extracellular. Residues tryptophan 208 to proline 398 form the Peptidase M12B domain. Asparagine 227 is a glycosylation site (N-linked (GlcNAc...) asparagine). Intrachain disulfides connect cysteine 316/cysteine 393, cysteine 356/cysteine 378, and cysteine 358/cysteine 363. Histidine 341 contacts Zn(2+). Residue glutamate 342 is part of the active site. Zn(2+) is bound by residues histidine 345 and histidine 351. Residues asparagine 377, asparagine 437, asparagine 478, asparagine 546, and asparagine 600 are each glycosylated (N-linked (GlcNAc...) asparagine). In terms of domain architecture, Disintegrin spans leucine 406 to aspartate 492. An intrachain disulfide couples cysteine 464 to cysteine 484. Intrachain disulfides connect cysteine 634/cysteine 645, cysteine 639/cysteine 651, and cysteine 653/cysteine 662. The EGF-like domain maps to cysteine 634–glutamine 663. Residues valine 682–glycine 702 traverse the membrane as a helical segment. Residues leucine 703–glycine 722 lie on the Cytoplasmic side of the membrane.

Requires Zn(2+) as cofactor. In terms of processing, has no obvious cleavage site for furin endopeptidase, suggesting that the proteolytic processing is regulated.

Its subcellular location is the membrane. Functionally, may be involved in sperm maturation and/or fertilization. May also be involved in epithelia functions associated with establishing and maintaining gradients of ions or nutrients. This Homo sapiens (Human) protein is Disintegrin and metalloproteinase domain-containing protein 21 (ADAM21).